Reading from the N-terminus, the 192-residue chain is Fe/S biogenesis protein NfuA (192 aa).

Positions 149 and 152 each coordinate [4Fe-4S] cluster.

It belongs to the NfuA family. Homodimer. Requires [4Fe-4S] cluster as cofactor.

In terms of biological role, involved in iron-sulfur cluster biogenesis. Binds a 4Fe-4S cluster, can transfer this cluster to apoproteins, and thereby intervenes in the maturation of Fe/S proteins. Could also act as a scaffold/chaperone for damaged Fe/S proteins. The sequence is that of Fe/S biogenesis protein NfuA from Pseudoalteromonas atlantica (strain T6c / ATCC BAA-1087).